The following is a 465-amino-acid chain: E3 ubiquitin-protein ligase TRIM38 (465 aa).

An RING-type zinc finger spans residues 16–63; that stretch reads CSICLSLMTNPVSINCGHSYCHLCITDFFKNPSQKQLRQETFCCPQCR. Ser70 carries the post-translational modification Phosphoserine. Residues 88–129 form a B box-type zinc finger; that stretch reads DQEMSCEEHGEQFHLFCEDEGQLICWRCERAPQHKGHTTALV. Zn(2+)-binding residues include Cys93, His96, Cys115, and His121. The region spanning 274-465 is the B30.2/SPRY domain; the sequence is CNVSKLYFDV…SPLFLPPPGD (192 aa).

As to quaternary structure, interacts (via B30.2/SPRY domain) with TAB2 and TAB3. In terms of tissue distribution, ubiquitous.

The protein resides in the cytoplasm. The catalysed reaction is S-ubiquitinyl-[E2 ubiquitin-conjugating enzyme]-L-cysteine + [acceptor protein]-L-lysine = [E2 ubiquitin-conjugating enzyme]-L-cysteine + N(6)-ubiquitinyl-[acceptor protein]-L-lysine.. The protein operates within protein modification; protein ubiquitination. It functions in the pathway protein modification; protein sumoylation. In terms of biological role, E3 ubiquitin-protein and E3 SUMO-protein ligase that acts as a regulator of innate immunity. Acts as a negative regulator of type I interferon IFN-beta production by catalyzing 'Lys-48'-linked polyubiquitination of AZI2/NAP1, leading to its degradation. Mediates 'Lys-48'-linked polyubiquitination and proteasomal degradation of the critical TLR adapter TICAM1, inhibiting TLR3-mediated type I interferon signaling. Acts as positive regulator of the cGAS-STING pathway by acting as a E3 SUMO-protein ligase: mediates sumoylation of CGAS and STING, preventing their degradation and thereby activating the innate immune response to DNA virus. Also acts as a negative regulator of NF-kappa-B signaling independently of its E3 protein ligase activity by promoting lysosome-dependent degradation of TAB2 and TAB3 adapters. The sequence is that of E3 ubiquitin-protein ligase TRIM38 from Homo sapiens (Human).